The following is a 217-amino-acid chain: ATP phosphoribosyltransferase (217 aa).

Belongs to the ATP phosphoribosyltransferase family. Short subfamily. Heteromultimer composed of HisG and HisZ subunits.

It is found in the cytoplasm. It carries out the reaction 1-(5-phospho-beta-D-ribosyl)-ATP + diphosphate = 5-phospho-alpha-D-ribose 1-diphosphate + ATP. It functions in the pathway amino-acid biosynthesis; L-histidine biosynthesis; L-histidine from 5-phospho-alpha-D-ribose 1-diphosphate: step 1/9. Catalyzes the condensation of ATP and 5-phosphoribose 1-diphosphate to form N'-(5'-phosphoribosyl)-ATP (PR-ATP). Has a crucial role in the pathway because the rate of histidine biosynthesis seems to be controlled primarily by regulation of HisG enzymatic activity. The sequence is that of ATP phosphoribosyltransferase from Burkholderia multivorans (strain ATCC 17616 / 249).